We begin with the raw amino-acid sequence, 478 residues long: Glutamine synthetase (478 aa).

One can recognise a GS beta-grasp domain in the interval 16 to 100; the sequence is EKVEYVDVRF…INFFVHDPFT (85 aa). Residues 108–478 enclose the GS catalytic domain; it reads PRNIARKAEN…PYEFALYYDV (371 aa). Mg(2+) is bound by residues Glu-133 and Glu-135. Residue Glu-214 coordinates ATP. Residues Glu-219 and Glu-227 each coordinate Mg(2+). 230–232 provides a ligand contact to ATP; the sequence is YQF. L-glutamate-binding positions include 271–272 and Gly-272; that span reads NG. Residue His-276 coordinates Mg(2+). Residues 278-280 and Ser-280 contribute to the ATP site; that span reads HQS. L-glutamate contacts are provided by Arg-329, Glu-335, and Arg-347. 3 residues coordinate ATP: Arg-347, Arg-352, and Lys-361. Glu-366 contacts Mg(2+). L-glutamate is bound at residue Arg-368. Position 406 is an O-AMP-tyrosine (Tyr-406).

The protein belongs to the glutamine synthetase family. As to quaternary structure, oligomer of 12 subunits arranged in the form of two hexagons. It depends on Mg(2+) as a cofactor.

It localises to the cytoplasm. It catalyses the reaction L-glutamate + NH4(+) + ATP = L-glutamine + ADP + phosphate + H(+). When cellular nitrogen levels are high, the C-terminal adenylyl transferase (AT) of GlnE inhibits GlnA by covalent transfer of an adenylyl group from ATP to Tyr-406. Conversely, when nitrogen levels are low, the N-terminal adenylyl removase (AR) of GlnE activates GlnA by removing the adenylyl group by phosphorolysis. The fully adenylated enzyme complex is inactive. Involved in nitrogen metabolism via ammonium assimilation. Catalyzes the ATP-dependent biosynthesis of glutamine from glutamate and ammonia. Also plays a key role in controlling the ammonia levels within infected host cells and so contributes to the pathogens capacity to inhibit phagosome acidification and phagosome-lysosome fusion. Involved in cell wall biosynthesis via the production of the major component poly-L-glutamine (PLG). PLG synthesis in the cell wall occurs only in nitrogen limiting conditions and on the contrary high nitrogen conditions inhibit PLG synthesis. The polypeptide is Glutamine synthetase (Mycobacterium bovis (strain ATCC BAA-935 / AF2122/97)).